The primary structure comprises 362 residues: Probable secreted beta-glucosidase UTH1 (362 aa).

An N-terminal signal peptide occupies residues 1–17 (MKLSALLALSASTAVLA).

The protein belongs to the SUN family.

The protein localises to the mitochondrion outer membrane. Its subcellular location is the secreted. It is found in the cell wall. In terms of biological role, involved in aging, oxidative stress response, and in the regulation of mitochondrial biogenesis. Inactivation of UTH1 increases life span, leads to higher resistance to heat stress and to hydrogen peroxide, and increases sensitivity to the superoxide radical-generating drug paraquat and to copper. Also required for the selective autophagic degradation of mitochondria (mitophagy) in response to nitrogen starvation. May play a role in cell wall morphogenesis and septation. Involved in the remodeling of the cell wall during the various phases of yeast culture development and under various environmental conditions and plays a role in septation. Involved in cell sensitivity to boric acid. The polypeptide is Probable secreted beta-glucosidase UTH1 (UTH1) (Saccharomyces cerevisiae (strain YJM789) (Baker's yeast)).